The primary structure comprises 89 residues: Elongation factor 1-beta (89 aa).

It belongs to the EF-1-beta/EF-1-delta family.

In terms of biological role, promotes the exchange of GDP for GTP in EF-1-alpha/GDP, thus allowing the regeneration of EF-1-alpha/GTP that could then be used to form the ternary complex EF-1-alpha/GTP/AAtRNA. This chain is Elongation factor 1-beta, found in Methanobrevibacter smithii (strain ATCC 35061 / DSM 861 / OCM 144 / PS).